A 284-amino-acid polypeptide reads, in one-letter code: L-ribulose-5-phosphate 3-epimerase UlaE (284 aa).

The protein belongs to the L-ribulose-5-phosphate 3-epimerase family.

It catalyses the reaction L-ribulose 5-phosphate = L-xylulose 5-phosphate. It functions in the pathway cofactor degradation; L-ascorbate degradation; D-xylulose 5-phosphate from L-ascorbate: step 3/4. Its function is as follows. Catalyzes the isomerization of L-xylulose-5-phosphate to L-ribulose-5-phosphate. Is involved in the anaerobic L-ascorbate utilization. This Salmonella typhimurium (strain LT2 / SGSC1412 / ATCC 700720) protein is L-ribulose-5-phosphate 3-epimerase UlaE.